Reading from the N-terminus, the 198-residue chain is Dermorphin-2 (198 aa).

The signal sequence occupies residues 1–20; sequence MSFLKKSLLLILFLGLVSLS. The propeptide occupies 21 to 45; the sequence is VCKEEKRVSEEENENEENHEEGSEM. Residues 24–198 are disordered; sequence EEKRVSEEEN…AFGYPSGEAK (175 aa). Alanine 49 bears the D-alanine (Ala) mark. Serine 54 carries the post-translational modification Serine amide. Over residues 56-65 the composition is skewed to basic and acidic residues; the sequence is EAKKIKRESE. Residues 56 to 80 constitute a propeptide that is removed on maturation; sequence EAKKIKRESEEEKEIEENHEEGSEM. Alanine 84 is modified (D-alanine (Ala)). At serine 89 the chain carries Serine amide. The propeptide occupies 91–115; it reads EAKKIKRESEEENENEENHEEGSEM. Over residues 100–109 the composition is skewed to acidic residues; that stretch reads EEENENEENH. At alanine 119 the chain carries D-alanine (Ala). Serine 124 carries the post-translational modification Serine amide. A compositionally biased stretch (basic and acidic residues) spans 126 to 135; the sequence is EAKKIKRESE. A propeptide spanning residues 126–150 is cleaved from the precursor; the sequence is EAKKIKRESEEEKEIEENHEEGSEM. Alanine 154 bears the D-alanine (Ala) mark. A Serine amide modification is found at serine 159. Positions 161-185 are excised as a propeptide; sequence EAKKIKRESEEENENEENHEEGSEM. Positions 170-179 are enriched in acidic residues; sequence EEENENEENH. A D-alanine (Ala) modification is found at alanine 189. The residue at position 194 (serine 194) is a Serine amide. The propeptide occupies 196–198; sequence EAK.

Belongs to the frog skin active peptide (FSAP) family. Dermorphin subfamily. Expressed by the skin glands.

The protein resides in the secreted. Functionally, dermorphin has a very potent opiate-like activity. It has high affinity and selectivity for mu-type opioid receptors. The chain is Dermorphin-2 from Phyllomedusa sauvagei (Sauvage's leaf frog).